The primary structure comprises 325 residues: Biotin synthase (325 aa).

One can recognise a Radical SAM core domain in the interval 36 to 254; it reads NEVQLAMLLS…IALARIMFPK (219 aa). The [4Fe-4S] cluster site is built by Cys-51, Cys-55, and Cys-58. Cys-95, Cys-126, Cys-186, and Arg-258 together coordinate [2Fe-2S] cluster.

This sequence belongs to the radical SAM superfamily. Biotin synthase family. Homodimer. Requires [4Fe-4S] cluster as cofactor. It depends on [2Fe-2S] cluster as a cofactor.

The enzyme catalyses (4R,5S)-dethiobiotin + (sulfur carrier)-SH + 2 reduced [2Fe-2S]-[ferredoxin] + 2 S-adenosyl-L-methionine = (sulfur carrier)-H + biotin + 2 5'-deoxyadenosine + 2 L-methionine + 2 oxidized [2Fe-2S]-[ferredoxin]. It functions in the pathway cofactor biosynthesis; biotin biosynthesis; biotin from 7,8-diaminononanoate: step 2/2. In terms of biological role, catalyzes the conversion of dethiobiotin (DTB) to biotin by the insertion of a sulfur atom into dethiobiotin via a radical-based mechanism. This chain is Biotin synthase, found in Neorickettsia sennetsu (strain ATCC VR-367 / Miyayama) (Ehrlichia sennetsu).